A 176-amino-acid chain; its full sequence is Large ribosomal subunit protein uL6 (176 aa).

The protein belongs to the universal ribosomal protein uL6 family. In terms of assembly, part of the 50S ribosomal subunit.

Its function is as follows. This protein binds to the 23S rRNA, and is important in its secondary structure. It is located near the subunit interface in the base of the L7/L12 stalk, and near the tRNA binding site of the peptidyltransferase center. The protein is Large ribosomal subunit protein uL6 of Methanothrix thermoacetophila (strain DSM 6194 / JCM 14653 / NBRC 101360 / PT) (Methanosaeta thermophila).